Reading from the N-terminus, the 192-residue chain is 3-hydroxyanthranilate 3,4-dioxygenase 1 (192 aa).

Residue Arg50 participates in O2 binding. Positions 54, 60, and 102 each coordinate Fe cation. Substrate is bound at residue Glu60. Substrate contacts are provided by Arg106 and Glu116. Residues Cys131, Cys134, Cys168, and Cys171 each coordinate a divalent metal cation.

This sequence belongs to the 3-HAO family. Fe(2+) is required as a cofactor.

It is found in the cytoplasm. It carries out the reaction 3-hydroxyanthranilate + O2 = (2Z,4Z)-2-amino-3-carboxymuconate 6-semialdehyde. Its pathway is cofactor biosynthesis; NAD(+) biosynthesis; quinolinate from L-kynurenine: step 3/3. In terms of biological role, catalyzes the oxidative ring opening of 3-hydroxyanthranilate to 2-amino-3-carboxymuconate semialdehyde, which spontaneously cyclizes to quinolinate. The chain is 3-hydroxyanthranilate 3,4-dioxygenase 1 (bna1-1) from Aspergillus fumigatus (strain CBS 144.89 / FGSC A1163 / CEA10) (Neosartorya fumigata).